Consider the following 179-residue polypeptide: Dual-action ribosomal maturation protein DarP (179 aa).

The protein belongs to the DarP family.

Its subcellular location is the cytoplasm. Member of a network of 50S ribosomal subunit biogenesis factors which assembles along the 30S-50S interface, preventing incorrect 23S rRNA structures from forming. Promotes peptidyl transferase center (PTC) maturation. In Photorhabdus laumondii subsp. laumondii (strain DSM 15139 / CIP 105565 / TT01) (Photorhabdus luminescens subsp. laumondii), this protein is Dual-action ribosomal maturation protein DarP.